An 873-amino-acid polypeptide reads, in one-letter code: Leucine--tRNA ligase (873 aa).

Residues 48-58 (PYPSGKLHMGH) carry the 'HIGH' region motif. Residues 636–640 (KMSKS) carry the 'KMSKS' region motif. Lysine 639 lines the ATP pocket.

It belongs to the class-I aminoacyl-tRNA synthetase family.

Its subcellular location is the cytoplasm. It catalyses the reaction tRNA(Leu) + L-leucine + ATP = L-leucyl-tRNA(Leu) + AMP + diphosphate. This chain is Leucine--tRNA ligase, found in Cupriavidus pinatubonensis (strain JMP 134 / LMG 1197) (Cupriavidus necator (strain JMP 134)).